A 597-amino-acid polypeptide reads, in one-letter code: Blastula protease 10 (597 aa).

The signal sequence occupies residues 1–16 (MKLILFLSGLVSLVLC). The propeptide at 17–93 (TLAAPTGDQK…DEMTGRKKRK (77 aa)) is activation peptide. The tract at residues 24 to 67 (DQKEIHTETPPPKKPSETTTPGALKTPQPEPKDEEPTPGAFQGD) is disordered. Residues 93-294 (KATIYESQRW…ELANLIYECD (202 aa)) form the Peptidase M12A domain. 9 disulfide bridges follow: cysteine 134–cysteine 293, cysteine 162–cysteine 182, cysteine 299–cysteine 315, cysteine 305–cysteine 317, cysteine 319–cysteine 328, cysteine 339–cysteine 365, cysteine 392–cysteine 412, cysteine 484–cysteine 510, and cysteine 537–cysteine 557. Histidine 190 contributes to the Zn(2+) binding site. Glutamate 191 is an active-site residue. Residues histidine 194 and histidine 200 each coordinate Zn(2+). The 35-residue stretch at 295–329 (DIEDCAGANECLNGGYHDTECNCVCPSGYNGDLCE) folds into the EGF-like domain. CUB domains follow at residues 339–449 (CSER…YRIV) and 484–595 (CGGS…YRAI).

Zn(2+) is required as a cofactor.

Its subcellular location is the cytoplasm. It localises to the perinuclear region. The protein resides in the cell cortex. It is found in the secreted. The protein localises to the extracellular space. Could be involved in the differentiation of ectodermal lineages and subsequent patterning of the embryo. This Paracentrotus lividus (Common sea urchin) protein is Blastula protease 10 (BP10).